Consider the following 70-residue polypeptide: Plasticin-S1 (70 aa).

The N-terminal stretch at 1-22 (MAFLKKSLFLVLFLALVPLSIC) is a signal peptide. Residues 23 to 45 (EEEKREGENEKEQEDDNQSEEKR) constitute a propeptide that is removed on maturation. Positions 25–45 (EKREGENEKEQEDDNQSEEKR) are disordered.

The protein belongs to the frog skin active peptide (FSAP) family. Plasticin subfamily. As to expression, expressed by the skin glands.

It is found in the secreted. The native peptide is a cationic amphipathic alpha-helical antimicrobial peptide with potent activity against both Gram-positive and Gram-negative bacteria. It has weak activity against fungi and shows low hemolytic activity. The chain is Plasticin-S1 from Phyllomedusa sauvagei (Sauvage's leaf frog).